The chain runs to 841 residues: Probable outer membrane usher protein EcpC (841 aa).

The signal sequence occupies residues 1 to 29 (MPLRRFSPGLKAQFAFGMVFLFVQPDASA).

This sequence belongs to the EcpC/MatD family.

Its function is as follows. Part of the ecpRABCDE operon, which encodes the E.coli common pilus (ECP). ECP is found in both commensal and pathogenic strains and plays a dual role in early-stage biofilm development and host cell recognition. This is Probable outer membrane usher protein EcpC (ecpC) from Escherichia coli O157:H7.